Consider the following 456-residue polypeptide: tRNA-2-methylthio-N(6)-dimethylallyladenosine synthase (456 aa).

The 118-residue stretch at lysine 3–alanine 120 folds into the MTTase N-terminal domain. Positions 12, 49, 83, 157, 161, and 164 each coordinate [4Fe-4S] cluster. A Radical SAM core domain is found at arginine 143–arginine 377. Residues glutamine 380–methionine 447 form the TRAM domain.

This sequence belongs to the methylthiotransferase family. MiaB subfamily. In terms of assembly, monomer. The cofactor is [4Fe-4S] cluster.

It is found in the cytoplasm. The enzyme catalyses N(6)-dimethylallyladenosine(37) in tRNA + (sulfur carrier)-SH + AH2 + 2 S-adenosyl-L-methionine = 2-methylsulfanyl-N(6)-dimethylallyladenosine(37) in tRNA + (sulfur carrier)-H + 5'-deoxyadenosine + L-methionine + A + S-adenosyl-L-homocysteine + 2 H(+). Functionally, catalyzes the methylthiolation of N6-(dimethylallyl)adenosine (i(6)A), leading to the formation of 2-methylthio-N6-(dimethylallyl)adenosine (ms(2)i(6)A) at position 37 in tRNAs that read codons beginning with uridine. The chain is tRNA-2-methylthio-N(6)-dimethylallyladenosine synthase from Paraburkholderia phymatum (strain DSM 17167 / CIP 108236 / LMG 21445 / STM815) (Burkholderia phymatum).